We begin with the raw amino-acid sequence, 282 residues long: 2-dehydro-3-deoxyphosphooctonate aldolase (282 aa).

It belongs to the KdsA family.

The protein localises to the cytoplasm. It carries out the reaction D-arabinose 5-phosphate + phosphoenolpyruvate + H2O = 3-deoxy-alpha-D-manno-2-octulosonate-8-phosphate + phosphate. The protein operates within carbohydrate biosynthesis; 3-deoxy-D-manno-octulosonate biosynthesis; 3-deoxy-D-manno-octulosonate from D-ribulose 5-phosphate: step 2/3. It participates in bacterial outer membrane biogenesis; lipopolysaccharide biosynthesis. The protein is 2-dehydro-3-deoxyphosphooctonate aldolase of Shewanella oneidensis (strain ATCC 700550 / JCM 31522 / CIP 106686 / LMG 19005 / NCIMB 14063 / MR-1).